The chain runs to 229 residues: Peptidyl-prolyl cis-trans isomerase FKBP17-1, chloroplastic (229 aa).

Residues 1 to 63 constitute a chloroplast transit peptide; the sequence is MIRCFAWTPL…SISLSIIAVT (63 aa). The PPIase FKBP-type domain maps to 105-225; sequence GDQIEIHYYG…VFDIELVSTR (121 aa).

The protein belongs to the FKBP-type PPIase family.

It is found in the plastid. The protein resides in the chloroplast thylakoid lumen. The enzyme catalyses [protein]-peptidylproline (omega=180) = [protein]-peptidylproline (omega=0). PPIases accelerate the folding of proteins. It catalyzes the cis-trans isomerization of proline imidic peptide bonds in oligopeptides. The chain is Peptidyl-prolyl cis-trans isomerase FKBP17-1, chloroplastic (FKBP17-1) from Arabidopsis thaliana (Mouse-ear cress).